Reading from the N-terminus, the 599-residue chain is Aspartate--tRNA(Asp/Asn) ligase (599 aa).

Glutamate 172 is a binding site for L-aspartate. Residues glutamine 196–lysine 199 form an aspartate region. Arginine 218 contributes to the L-aspartate binding site. ATP contacts are provided by residues arginine 218–glutamate 220 and glutamine 227. Histidine 451 provides a ligand contact to L-aspartate. An ATP-binding site is contributed by glutamate 485. An L-aspartate-binding site is contributed by arginine 492. Glycine 537–arginine 540 contacts ATP.

Belongs to the class-II aminoacyl-tRNA synthetase family. Type 1 subfamily. In terms of assembly, homodimer.

It localises to the cytoplasm. The catalysed reaction is tRNA(Asx) + L-aspartate + ATP = L-aspartyl-tRNA(Asx) + AMP + diphosphate. In terms of biological role, aspartyl-tRNA synthetase with relaxed tRNA specificity since it is able to aspartylate not only its cognate tRNA(Asp) but also tRNA(Asn). Reaction proceeds in two steps: L-aspartate is first activated by ATP to form Asp-AMP and then transferred to the acceptor end of tRNA(Asp/Asn). This chain is Aspartate--tRNA(Asp/Asn) ligase, found in Aromatoleum aromaticum (strain DSM 19018 / LMG 30748 / EbN1) (Azoarcus sp. (strain EbN1)).